A 657-amino-acid polypeptide reads, in one-letter code: Glycogen debranching enzyme (657 aa).

Asp-336 acts as the Nucleophile in catalysis. Glu-371 serves as the catalytic Proton donor. The segment covering 458 to 467 has biased composition (basic and acidic residues); sequence NEANGEENRD. Positions 458–479 are disordered; that stretch reads NEANGEENRDGTNNNYSNNHGK.

Belongs to the glycosyl hydrolase 13 family.

It catalyses the reaction Hydrolysis of (1-&gt;6)-alpha-D-glucosidic linkages to branches with degrees of polymerization of three or four glucose residues in limit dextrin.. It participates in glycan degradation; glycogen degradation. Functionally, removes maltotriose and maltotetraose chains that are attached by 1,6-alpha-linkage to the limit dextrin main chain, generating a debranched limit dextrin. This Shigella sonnei (strain Ss046) protein is Glycogen debranching enzyme.